Consider the following 346-residue polypeptide: MTQEDSSRGLTSVGRVDFTNRFADRYNEWLGTTGDETKQVEDRVETDSGLPGHDIYGFENEIKSLQHFLLDQKSYKLFKSLVVVGEYGVGKTALCQQIFNDYDVRNAYAPRIWVSMHSNESKEGLDGKICVLKTILKGLGVEESMFESIHREVVEEVSNRQEAGEIDGETAKEKEISALLYALHLNLRWKKYLIVFDDVQEIDNWDEKLDAKLNEGEKWGKYLSDGFPKGSGGRVIYTTRDENLAKNLVVQKHEIHRLWPLSDSNSVWKIYEAMIQKREKESPRNDKKCIDELMNKSRGLPLAARLLAELDPMLFDDGKANQNGSKDGKTDSVDNPNSEESKTKPL.

One can recognise an NB-ARC domain in the interval 38 to 116; that stretch reads KQVEDRVETD…AYAPRIWVSM (79 aa). Residue 85–92 coordinates ATP; the sequence is GEYGVGKT. Residues 315 to 346 form a disordered region; sequence FDDGKANQNGSKDGKTDSVDNPNSEESKTKPL.

Functionally, possible disease resistance protein. The chain is Probable disease resistance protein At5g45440 from Arabidopsis thaliana (Mouse-ear cress).